The primary structure comprises 1360 residues: DNA-directed RNA polymerase subunit beta (1360 aa).

The protein belongs to the RNA polymerase beta chain family. In terms of assembly, the RNAP catalytic core consists of 2 alpha, 1 beta, 1 beta' and 1 omega subunit. When a sigma factor is associated with the core the holoenzyme is formed, which can initiate transcription.

The enzyme catalyses RNA(n) + a ribonucleoside 5'-triphosphate = RNA(n+1) + diphosphate. In terms of biological role, DNA-dependent RNA polymerase catalyzes the transcription of DNA into RNA using the four ribonucleoside triphosphates as substrates. The chain is DNA-directed RNA polymerase subunit beta from Vesicomyosocius okutanii subsp. Calyptogena okutanii (strain HA).